The following is a 217-amino-acid chain: Somatotropin (217 aa).

The N-terminal stretch at 1–27 (MMAAGPRTSLLLAFTLLCLPWTQVVGA) is a signal peptide. His46 is a binding site for Zn(2+). A disulfide bridge connects residues Cys79 and Cys190. At Ser132 the chain carries Phosphoserine. Residue Glu199 participates in Zn(2+) binding. A disulfide bridge links Cys207 with Cys215.

Belongs to the somatotropin/prolactin family.

The protein resides in the secreted. Its function is as follows. Plays an important role in growth control. Its major role in stimulating body growth is to stimulate the liver and other tissues to secrete IGF1. It stimulates both the differentiation and proliferation of myoblasts. It also stimulates amino acid uptake and protein synthesis in muscle and other tissues. The polypeptide is Somatotropin (GH1) (Capra hircus (Goat)).